Consider the following 385-residue polypeptide: Putative transport protein MT1133 (385 aa).

The next 8 helical transmembrane spans lie at 7–27 (LTQK…GAYF), 32–52 (FVLI…FKWF), 66–86 (LLSA…LAIV), 159–179 (SLAG…ALLV), 218–238 (FVIA…AGFH), 241–261 (FFIF…GGIV), 263–283 (IPFG…FVLL), and 319–339 (GITM…ILIV).

Belongs to the autoinducer-2 exporter (AI-2E) (TC 2.A.86) family.

The protein localises to the cell membrane. This is Putative transport protein MT1133 from Mycobacterium tuberculosis (strain CDC 1551 / Oshkosh).